The primary structure comprises 38 residues: Large ribosomal subunit protein bL36 (38 aa).

It belongs to the bacterial ribosomal protein bL36 family.

The sequence is that of Large ribosomal subunit protein bL36 from Ectopseudomonas mendocina (strain ymp) (Pseudomonas mendocina).